We begin with the raw amino-acid sequence, 236 residues long: Endonuclease NucS (236 aa).

Belongs to the NucS endonuclease family.

The protein resides in the cytoplasm. Functionally, cleaves both 3' and 5' ssDNA extremities of branched DNA structures. This Saccharolobus solfataricus (strain ATCC 35092 / DSM 1617 / JCM 11322 / P2) (Sulfolobus solfataricus) protein is Endonuclease NucS.